The primary structure comprises 435 residues: Methylenetetrahydrofolate--tRNA-(uracil-5-)-methyltransferase TrmFO (435 aa).

Residue 9–14 (GAGLAG) coordinates FAD.

The protein belongs to the MnmG family. TrmFO subfamily. The cofactor is FAD.

It is found in the cytoplasm. It carries out the reaction uridine(54) in tRNA + (6R)-5,10-methylene-5,6,7,8-tetrahydrofolate + NADH + H(+) = 5-methyluridine(54) in tRNA + (6S)-5,6,7,8-tetrahydrofolate + NAD(+). The enzyme catalyses uridine(54) in tRNA + (6R)-5,10-methylene-5,6,7,8-tetrahydrofolate + NADPH + H(+) = 5-methyluridine(54) in tRNA + (6S)-5,6,7,8-tetrahydrofolate + NADP(+). In terms of biological role, catalyzes the folate-dependent formation of 5-methyl-uridine at position 54 (M-5-U54) in all tRNAs. This Staphylococcus epidermidis (strain ATCC 35984 / DSM 28319 / BCRC 17069 / CCUG 31568 / BM 3577 / RP62A) protein is Methylenetetrahydrofolate--tRNA-(uracil-5-)-methyltransferase TrmFO.